A 172-amino-acid chain; its full sequence is Protein-export protein SecB (172 aa).

It belongs to the SecB family. Homotetramer, a dimer of dimers. One homotetramer interacts with 1 SecA dimer.

It is found in the cytoplasm. In terms of biological role, one of the proteins required for the normal export of preproteins out of the cell cytoplasm. It is a molecular chaperone that binds to a subset of precursor proteins, maintaining them in a translocation-competent state. It also specifically binds to its receptor SecA. The chain is Protein-export protein SecB from Haemophilus ducreyi (strain 35000HP / ATCC 700724).